Reading from the N-terminus, the 119-residue chain is Small ribosomal subunit protein uS13 (119 aa).

The tract at residues 90–119 is disordered; sequence IRHRRGLPLRGQRTRSNARTRKGKRKPIRS. The span at 91-119 shows a compositional bias: basic residues; that stretch reads RHRRGLPLRGQRTRSNARTRKGKRKPIRS.

It belongs to the universal ribosomal protein uS13 family. In terms of assembly, part of the 30S ribosomal subunit. Forms a loose heterodimer with protein S19. Forms two bridges to the 50S subunit in the 70S ribosome.

Located at the top of the head of the 30S subunit, it contacts several helices of the 16S rRNA. In the 70S ribosome it contacts the 23S rRNA (bridge B1a) and protein L5 of the 50S subunit (bridge B1b), connecting the 2 subunits; these bridges are implicated in subunit movement. Contacts the tRNAs in the A and P-sites. In Coxiella burnetii (strain CbuK_Q154) (Coxiella burnetii (strain Q154)), this protein is Small ribosomal subunit protein uS13.